A 607-amino-acid chain; its full sequence is Phosphogluconate dehydratase (607 aa).

Residues Cys156 and Cys223 each contribute to the [4Fe-4S] cluster site.

It belongs to the IlvD/Edd family. [4Fe-4S] cluster is required as a cofactor.

It carries out the reaction 6-phospho-D-gluconate = 2-dehydro-3-deoxy-6-phospho-D-gluconate + H2O. The protein operates within carbohydrate metabolism; Entner-Doudoroff pathway. Catalyzes the dehydration of 6-phospho-D-gluconate to 2-dehydro-3-deoxy-6-phospho-D-gluconate. This is Phosphogluconate dehydratase from Zymomonas mobilis subsp. mobilis (strain ATCC 31821 / ZM4 / CP4).